The chain runs to 478 residues: Protein nucleotidyltransferase YdiU (478 aa).

8 residues coordinate ATP: G84, G86, R87, K107, D119, G120, R170, and R177. D246 (proton acceptor) is an active-site residue. Mg(2+)-binding residues include N247 and D256. D256 lines the ATP pocket.

The protein belongs to the SELO family. The cofactor is Mg(2+). Requires Mn(2+) as cofactor.

It catalyses the reaction L-seryl-[protein] + ATP = 3-O-(5'-adenylyl)-L-seryl-[protein] + diphosphate. The enzyme catalyses L-threonyl-[protein] + ATP = 3-O-(5'-adenylyl)-L-threonyl-[protein] + diphosphate. It carries out the reaction L-tyrosyl-[protein] + ATP = O-(5'-adenylyl)-L-tyrosyl-[protein] + diphosphate. The catalysed reaction is L-histidyl-[protein] + UTP = N(tele)-(5'-uridylyl)-L-histidyl-[protein] + diphosphate. It catalyses the reaction L-seryl-[protein] + UTP = O-(5'-uridylyl)-L-seryl-[protein] + diphosphate. The enzyme catalyses L-tyrosyl-[protein] + UTP = O-(5'-uridylyl)-L-tyrosyl-[protein] + diphosphate. Nucleotidyltransferase involved in the post-translational modification of proteins. It can catalyze the addition of adenosine monophosphate (AMP) or uridine monophosphate (UMP) to a protein, resulting in modifications known as AMPylation and UMPylation. In Escherichia coli O157:H7, this protein is Protein nucleotidyltransferase YdiU.